The following is a 131-amino-acid chain: Holo-[acyl-carrier-protein] synthase (131 aa).

Residues D8 and E57 each contribute to the Mg(2+) site.

The protein belongs to the P-Pant transferase superfamily. AcpS family. The cofactor is Mg(2+).

The protein resides in the cytoplasm. It catalyses the reaction apo-[ACP] + CoA = holo-[ACP] + adenosine 3',5'-bisphosphate + H(+). In terms of biological role, transfers the 4'-phosphopantetheine moiety from coenzyme A to a Ser of acyl-carrier-protein. In Desulforudis audaxviator (strain MP104C), this protein is Holo-[acyl-carrier-protein] synthase.